Here is a 288-residue protein sequence, read N- to C-terminus: Elongation factor Ts (288 aa).

Residues threonine 82 to valine 85 are involved in Mg(2+) ion dislocation from EF-Tu.

The protein belongs to the EF-Ts family.

Its subcellular location is the cytoplasm. Functionally, associates with the EF-Tu.GDP complex and induces the exchange of GDP to GTP. It remains bound to the aminoacyl-tRNA.EF-Tu.GTP complex up to the GTP hydrolysis stage on the ribosome. In Chlorobium phaeobacteroides (strain BS1), this protein is Elongation factor Ts.